The following is a 136-amino-acid chain: Ciliary microtubule inner protein 1 (136 aa).

Its subcellular location is the cell projection. It localises to the cilium. This chain is Ciliary microtubule inner protein 1 (Cimip1), found in Mus musculus (Mouse).